The sequence spans 355 residues: 3-isopropylmalate dehydrogenase (355 aa).

NAD(+) is bound at residue 78-91; sequence GYKWDNLPRPERPE. Arginine 98, arginine 136, and aspartate 226 together coordinate substrate. Positions 226, 250, and 254 each coordinate Mg(2+). 284 to 296 is a binding site for NAD(+); that stretch reads GSAPDIAGQDKAN.

It belongs to the isocitrate and isopropylmalate dehydrogenases family. LeuB type 1 subfamily. Homodimer. Requires Mg(2+) as cofactor. Mn(2+) serves as cofactor.

It is found in the cytoplasm. The catalysed reaction is (2R,3S)-3-isopropylmalate + NAD(+) = 4-methyl-2-oxopentanoate + CO2 + NADH. It functions in the pathway amino-acid biosynthesis; L-leucine biosynthesis; L-leucine from 3-methyl-2-oxobutanoate: step 3/4. Its function is as follows. Catalyzes the oxidation of 3-carboxy-2-hydroxy-4-methylpentanoate (3-isopropylmalate) to 3-carboxy-4-methyl-2-oxopentanoate. The product decarboxylates to 4-methyl-2 oxopentanoate. This is 3-isopropylmalate dehydrogenase (leuB) from Arthrospira platensis (Spirulina platensis).